The sequence spans 156 residues: ATP synthase subunit b (156 aa).

A helical transmembrane segment spans residues 11 to 31; that stretch reads AIAFVLFVIFCMKYVWPPIMA.

Belongs to the ATPase B chain family. As to quaternary structure, F-type ATPases have 2 components, F(1) - the catalytic core - and F(0) - the membrane proton channel. F(1) has five subunits: alpha(3), beta(3), gamma(1), delta(1), epsilon(1). F(0) has three main subunits: a(1), b(2) and c(10-14). The alpha and beta chains form an alternating ring which encloses part of the gamma chain. F(1) is attached to F(0) by a central stalk formed by the gamma and epsilon chains, while a peripheral stalk is formed by the delta and b chains.

The protein resides in the cell inner membrane. Functionally, f(1)F(0) ATP synthase produces ATP from ADP in the presence of a proton or sodium gradient. F-type ATPases consist of two structural domains, F(1) containing the extramembraneous catalytic core and F(0) containing the membrane proton channel, linked together by a central stalk and a peripheral stalk. During catalysis, ATP synthesis in the catalytic domain of F(1) is coupled via a rotary mechanism of the central stalk subunits to proton translocation. Component of the F(0) channel, it forms part of the peripheral stalk, linking F(1) to F(0). The polypeptide is ATP synthase subunit b (Yersinia pseudotuberculosis serotype O:1b (strain IP 31758)).